The following is a 164-amino-acid chain: Cyclic pyranopterin monophosphate synthase (164 aa).

Residues 73–75 and 111–112 contribute to the substrate site; these read LCH and ME. Aspartate 126 is an active-site residue.

It belongs to the MoaC family. In terms of assembly, homohexamer; trimer of dimers.

The catalysed reaction is (8S)-3',8-cyclo-7,8-dihydroguanosine 5'-triphosphate = cyclic pyranopterin phosphate + diphosphate. It functions in the pathway cofactor biosynthesis; molybdopterin biosynthesis. Functionally, catalyzes the conversion of (8S)-3',8-cyclo-7,8-dihydroguanosine 5'-triphosphate to cyclic pyranopterin monophosphate (cPMP). The polypeptide is Cyclic pyranopterin monophosphate synthase (Herpetosiphon aurantiacus (strain ATCC 23779 / DSM 785 / 114-95)).